The chain runs to 273 residues: Tryptophan synthase alpha chain (273 aa).

Residues glutamate 56 and aspartate 67 each act as proton acceptor in the active site.

This sequence belongs to the TrpA family. In terms of assembly, tetramer of two alpha and two beta chains.

The catalysed reaction is (1S,2R)-1-C-(indol-3-yl)glycerol 3-phosphate + L-serine = D-glyceraldehyde 3-phosphate + L-tryptophan + H2O. It participates in amino-acid biosynthesis; L-tryptophan biosynthesis; L-tryptophan from chorismate: step 5/5. In terms of biological role, the alpha subunit is responsible for the aldol cleavage of indoleglycerol phosphate to indole and glyceraldehyde 3-phosphate. In Shewanella baltica (strain OS185), this protein is Tryptophan synthase alpha chain.